The following is a 208-amino-acid chain: uncharacterized protein (208 aa).

The disordered stretch occupies residues 126–151; sequence VGSGSGSDSSSGSTSSPNTVNNYNSD. Positions 131–141 are enriched in low complexity; sequence GSDSSSGSTSS.

This is an uncharacterized protein from Dictyostelium discoideum (Social amoeba).